A 346-amino-acid chain; its full sequence is Anthocyanidin 3-O-glucosyltransferase 2 (346 aa).

UDP-alpha-D-glucose is bound by residues Ala-221, Gln-223, His-238, Trp-241, Asn-242, Ser-243, and Glu-246. Position 261 (Ala-261) interacts with an anthocyanidin. UDP-alpha-D-glucose contacts are provided by Glu-262 and Gln-263.

This sequence belongs to the UDP-glycosyltransferase family. Expressed in cotyledons, roots and leaves.

It carries out the reaction an anthocyanidin + UDP-alpha-D-glucose + H(+) = an anthocyanidin 3-O-beta-D-glucoside + UDP. It functions in the pathway pigment biosynthesis; anthocyanin biosynthesis. In the presence of other necessary color factors, this glycosylation reaction allows the accumulation of anthocyanin pigments. The polypeptide is Anthocyanidin 3-O-glucosyltransferase 2 (GT2) (Manihot esculenta (Cassava)).